We begin with the raw amino-acid sequence, 135 residues long: Integration host factor subunit beta (135 aa).

Residues 83-92 (GKELRERVDR) show a composition bias toward basic and acidic residues. Residues 83 to 135 (GKELRERVDRTVTQGGGMNGNGHAPHGKTGQSQLGSQSPASLHDDGQLNLVRS) form a disordered region. The span at 111 to 122 (TGQSQLGSQSPA) shows a compositional bias: polar residues.

It belongs to the bacterial histone-like protein family. Heterodimer of an alpha and a beta chain.

Functionally, this protein is one of the two subunits of integration host factor, a specific DNA-binding protein that functions in genetic recombination as well as in transcriptional and translational control. The polypeptide is Integration host factor subunit beta (Cupriavidus metallidurans (strain ATCC 43123 / DSM 2839 / NBRC 102507 / CH34) (Ralstonia metallidurans)).